The primary structure comprises 314 residues: Putative S-adenosyl-L-methionine-dependent methyltransferase MAV_0301 (314 aa).

S-adenosyl-L-methionine-binding positions include D132 and 161–162 (DL).

This sequence belongs to the UPF0677 family.

Its function is as follows. Exhibits S-adenosyl-L-methionine-dependent methyltransferase activity. The protein is Putative S-adenosyl-L-methionine-dependent methyltransferase MAV_0301 of Mycobacterium avium (strain 104).